The primary structure comprises 146 residues: Hemoglobin subunit beta (146 aa).

Residue valine 1 is modified to N-acetylvaline. Positions 2–146 (HLTGEEKAAV…VANALAHKYH (145 aa)) constitute a Globin domain. A Phosphothreonine modification is found at threonine 12. A Phosphoserine modification is found at serine 44. Lysine 59 is modified (N6-acetyllysine). Position 63 (histidine 63) interacts with heme b. Lysine 82 carries the N6-acetyllysine modification. Histidine 92 contacts heme b. Cysteine 93 carries the post-translational modification S-nitrosocysteine. Residue lysine 144 is modified to N6-acetyllysine.

The protein belongs to the globin family. Heterotetramer of two alpha chains and two beta chains. In terms of tissue distribution, red blood cells.

In terms of biological role, involved in oxygen transport from the lung to the various peripheral tissues. The chain is Hemoglobin subunit beta (HBB) from Ailurus fulgens (Himalayan red panda).